Reading from the N-terminus, the 91-residue chain is DNA-directed RNA polymerase subunit omega (91 aa).

A disordered region spans residues 66-91 (QMPPPLPNFPGAANREATGAEDAAGE).

This sequence belongs to the RNA polymerase subunit omega family. In terms of assembly, the RNAP catalytic core consists of 2 alpha, 1 beta, 1 beta' and 1 omega subunit. When a sigma factor is associated with the core the holoenzyme is formed, which can initiate transcription.

The catalysed reaction is RNA(n) + a ribonucleoside 5'-triphosphate = RNA(n+1) + diphosphate. Functionally, promotes RNA polymerase assembly. Latches the N- and C-terminal regions of the beta' subunit thereby facilitating its interaction with the beta and alpha subunits. This is DNA-directed RNA polymerase subunit omega from Acidithiobacillus ferrooxidans (strain ATCC 23270 / DSM 14882 / CIP 104768 / NCIMB 8455) (Ferrobacillus ferrooxidans (strain ATCC 23270)).